Here is a 318-residue protein sequence, read N- to C-terminus: L-lactate dehydrogenase (318 aa).

The NAD(+) site is built by Val-14, Asp-35, Lys-40, and Tyr-66. Substrate is bound by residues Arg-89 and 121–124; that span reads NPVD. Residue Ser-144 coordinates NAD(+). Residue 149-152 coordinates substrate; sequence DTAR. His-176 functions as the Proton acceptor in the catalytic mechanism. Tyr-220 carries the post-translational modification Phosphotyrosine. Thr-229 provides a ligand contact to substrate.

The protein belongs to the LDH/MDH superfamily. LDH family. As to quaternary structure, homotetramer.

It is found in the cytoplasm. The catalysed reaction is (S)-lactate + NAD(+) = pyruvate + NADH + H(+). Its pathway is fermentation; pyruvate fermentation to lactate; (S)-lactate from pyruvate: step 1/1. Catalyzes the conversion of lactate to pyruvate. The protein is L-lactate dehydrogenase of Staphylococcus haemolyticus (strain JCSC1435).